We begin with the raw amino-acid sequence, 218 residues long: N-(5'-phosphoribosyl)anthranilate isomerase (218 aa).

This sequence belongs to the TrpF family.

It catalyses the reaction N-(5-phospho-beta-D-ribosyl)anthranilate = 1-(2-carboxyphenylamino)-1-deoxy-D-ribulose 5-phosphate. Its pathway is amino-acid biosynthesis; L-tryptophan biosynthesis; L-tryptophan from chorismate: step 3/5. This Rhodopseudomonas palustris (strain HaA2) protein is N-(5'-phosphoribosyl)anthranilate isomerase.